Here is a 376-residue protein sequence, read N- to C-terminus: MLNFELITTDGNARRGRVTLNHGVVETPIFMPVGTYGSVKAMSPLELNEIGAHIILGNTFHLWLRPGLDVVNAHEGLHKFIGWDKPILTDSGGFQVFSLGDLRKITEDGVTFASPVNGDKLFLSPEISMQIQRTLNSDIVMQFDECTPYEIDGRAATHEEAAKSMRMSLRWAKRSRDEFERLANPNALFGIVQGGMYEDLRDESLAGLSELDFHGFAIGGLSVGEPKEDMMRVLEHVAPRLPAHKPHYLMGVGTPEDLVAGVAAGVDMFDCVMPTRNARNGWLFTRFGDVKIKNAAHRNDPRPLDESCACYTCRNFSRAYLHHLHRVGEILGARLNTIHNLHYYLQLMREMREAIEHHRFADFRRQFAADRARGTQ.

Catalysis depends on Asp90, which acts as the Proton acceptor. Residues 90 to 94, Asp144, Gln193, and Gly220 each bind substrate; that span reads DSGGF. The RNA binding stretch occupies residues 251–257; it reads GVGTPED. Asp270 (nucleophile) is an active-site residue. An RNA binding; important for wobble base 34 recognition region spans residues 275–279; the sequence is TRNAR. Zn(2+) is bound by residues Cys308, Cys310, Cys313, and His339.

Belongs to the queuine tRNA-ribosyltransferase family. Homodimer. Within each dimer, one monomer is responsible for RNA recognition and catalysis, while the other monomer binds to the replacement base PreQ1. It depends on Zn(2+) as a cofactor.

It catalyses the reaction 7-aminomethyl-7-carbaguanine + guanosine(34) in tRNA = 7-aminomethyl-7-carbaguanosine(34) in tRNA + guanine. It participates in tRNA modification; tRNA-queuosine biosynthesis. In terms of biological role, catalyzes the base-exchange of a guanine (G) residue with the queuine precursor 7-aminomethyl-7-deazaguanine (PreQ1) at position 34 (anticodon wobble position) in tRNAs with GU(N) anticodons (tRNA-Asp, -Asn, -His and -Tyr). Catalysis occurs through a double-displacement mechanism. The nucleophile active site attacks the C1' of nucleotide 34 to detach the guanine base from the RNA, forming a covalent enzyme-RNA intermediate. The proton acceptor active site deprotonates the incoming PreQ1, allowing a nucleophilic attack on the C1' of the ribose to form the product. After dissociation, two additional enzymatic reactions on the tRNA convert PreQ1 to queuine (Q), resulting in the hypermodified nucleoside queuosine (7-(((4,5-cis-dihydroxy-2-cyclopenten-1-yl)amino)methyl)-7-deazaguanosine). This Cupriavidus necator (strain ATCC 17699 / DSM 428 / KCTC 22496 / NCIMB 10442 / H16 / Stanier 337) (Ralstonia eutropha) protein is Queuine tRNA-ribosyltransferase.